The chain runs to 450 residues: Methionine aminopeptidase 2 (450 aa).

Residues 1 to 99 are disordered; the sequence is MAVQAPEVDK…LFPNSQYPEG (99 aa). The span at 33-49 shows a compositional bias: acidic residues; sequence GDEDAENEESDEDDDQG. Residues 60–75 show a composition bias toward basic residues; that stretch reads KKKRKRKPKKKKKKGV. H200 serves as a coordination point for substrate. A divalent metal cation-binding residues include D220, D231, and H300. Position 308 (H308) interacts with substrate. The a divalent metal cation site is built by E336 and E431.

It belongs to the peptidase M24A family. Methionine aminopeptidase eukaryotic type 2 subfamily. Co(2+) is required as a cofactor. Requires Zn(2+) as cofactor. It depends on Mn(2+) as a cofactor. Fe(2+) serves as cofactor.

It is found in the cytoplasm. The enzyme catalyses Release of N-terminal amino acids, preferentially methionine, from peptides and arylamides.. Functionally, cotranslationally removes the N-terminal methionine from nascent proteins. The N-terminal methionine is often cleaved when the second residue in the primary sequence is small and uncharged (Met-Ala-, Cys, Gly, Pro, Ser, Thr, or Val). The polypeptide is Methionine aminopeptidase 2 (Uncinocarpus reesii (strain UAMH 1704)).